A 398-amino-acid polypeptide reads, in one-letter code: Tryptophan synthase beta chain (398 aa).

Lysine 88 carries the post-translational modification N6-(pyridoxal phosphate)lysine.

It belongs to the TrpB family. Tetramer of two alpha and two beta chains. Pyridoxal 5'-phosphate serves as cofactor.

It catalyses the reaction (1S,2R)-1-C-(indol-3-yl)glycerol 3-phosphate + L-serine = D-glyceraldehyde 3-phosphate + L-tryptophan + H2O. The protein operates within amino-acid biosynthesis; L-tryptophan biosynthesis; L-tryptophan from chorismate: step 5/5. In terms of biological role, the beta subunit is responsible for the synthesis of L-tryptophan from indole and L-serine. The sequence is that of Tryptophan synthase beta chain from Actinobacillus succinogenes (strain ATCC 55618 / DSM 22257 / CCUG 43843 / 130Z).